A 941-amino-acid chain; its full sequence is Cell wall protein IFF3 (941 aa).

Positions 1-20 (MQLFQNILVSIALLTQVVFA) are cleaved as a signal peptide. Residues N36, N367, N686, N732, N790, N818, N825, N884, and N917 are each glycosylated (N-linked (GlcNAc...) asparagine). A lipid anchor (GPI-anchor amidated asparagine) is attached at N917. Positions 918–941 (GSNKESIENIKYLTLVVFGLMMFM) are cleaved as a propeptide — removed in mature form.

It belongs to the HYR1/IFF family. The GPI-anchor is attached to the protein in the endoplasmic reticulum and serves to target the protein to the cell surface. There, the glucosamine-inositol phospholipid moiety is cleaved off and the GPI-modified mannoprotein is covalently attached via its lipidless GPI glycan remnant to the 1,6-beta-glucan of the outer cell wall layer.

The protein resides in the secreted. The protein localises to the cell wall. It is found in the membrane. In terms of biological role, GPI-anchored cell wall protein involved in cell wall organization, hyphal growth, as well as in host-fungal interaction and virulence. In Candida albicans (strain SC5314 / ATCC MYA-2876) (Yeast), this protein is Cell wall protein IFF3 (IFF3).